Reading from the N-terminus, the 227-residue chain is UPF0758 protein Spro_4842 (227 aa).

One can recognise an MPN domain in the interval 105–227 (AMLNPRMTQH…CVSFAERGWL (123 aa)). Zn(2+) contacts are provided by H176, H178, and D189. The JAMM motif signature appears at 176–189 (HNHPSGKAEPSHAD).

This sequence belongs to the UPF0758 family. YicR subfamily.

The sequence is that of UPF0758 protein Spro_4842 from Serratia proteamaculans (strain 568).